The sequence spans 302 residues: DNA-binding transcriptional activator HetR (302 aa).

The active site involves Ser-153.

Belongs to the peptidase S48 family. As to quaternary structure, homodimer; disulfide-linked.

Its function is as follows. Might be involved in temporal and/or spatial regulation of nitrogen fixation. Dimerization is required for DNA-binding. Has both a protease and a DNA-binding activity. The protein is DNA-binding transcriptional activator HetR of Trichodesmium erythraeum (strain IMS101).